The sequence spans 182 residues: MSEPIQNENVESNVADAADIAAATAATEEFTNTIGDAIATASEEETIEAAPVVLDGPIQTVGRRKRAIVRVRLVAGSGEFKCNGRTLEEYFPNKLHQQLIKAPLVLLDRENQFDIVATLKGGGPTGQAGAFRLAIARALNAYNPAERGELKKAGFLTRDARAVERKKAGLHKARRAPQYSKR.

It belongs to the universal ribosomal protein uS9 family.

The polypeptide is Small ribosomal subunit protein uS9 (Corynebacterium glutamicum (strain R)).